Consider the following 376-residue polypeptide: Alanine racemase (376 aa).

Residue Lys-36 is the Proton acceptor; specific for D-alanine of the active site. Lys-36 is subject to N6-(pyridoxal phosphate)lysine. Arg-134 provides a ligand contact to substrate. Tyr-266 acts as the Proton acceptor; specific for L-alanine in catalysis. Met-314 is a substrate binding site.

This sequence belongs to the alanine racemase family. It depends on pyridoxal 5'-phosphate as a cofactor.

The catalysed reaction is L-alanine = D-alanine. It participates in amino-acid biosynthesis; D-alanine biosynthesis; D-alanine from L-alanine: step 1/1. Catalyzes the interconversion of L-alanine and D-alanine. May also act on other amino acids. The sequence is that of Alanine racemase (alr) from Nitratidesulfovibrio vulgaris (strain DP4) (Desulfovibrio vulgaris).